Reading from the N-terminus, the 231-residue chain is uncharacterized protein (231 aa).

Helical transmembrane passes span 26-46 (TYSWMAAGLALTAGVAYLTAQ), 56-76 (SLRLPLMLAQLALVFVLSMFA), 84-104 (AGALFVGYAALTGLTFSALLF), 112-132 (ITAFAVSAGTFGLMSVAGFVI), 142-162 (FFLFAVLGLVVAMLVNLFVGS), 163-183 (SALSLGISMIGVFLFAGLTAY), and 206-226 (INGALALYLDFINIFLFLLNI).

Belongs to the BI1 family.

It is found in the cell membrane. This is an uncharacterized protein from Deinococcus radiodurans (strain ATCC 13939 / DSM 20539 / JCM 16871 / CCUG 27074 / LMG 4051 / NBRC 15346 / NCIMB 9279 / VKM B-1422 / R1).